Consider the following 302-residue polypeptide: Glutaminase (302 aa).

The substrate site is built by Ser-61, Asn-111, Glu-155, Asn-162, Tyr-186, Tyr-238, and Val-256.

This sequence belongs to the glutaminase family. As to quaternary structure, homotetramer.

It catalyses the reaction L-glutamine + H2O = L-glutamate + NH4(+). In Pseudomonas fluorescens (strain Pf0-1), this protein is Glutaminase.